We begin with the raw amino-acid sequence, 89 residues long: Small ribosomal subunit protein uS15 (89 aa).

The span at 1 to 11 shows a compositional bias: basic and acidic residues; sequence MSITAERKAEV. The segment at 1–24 is disordered; the sequence is MSITAERKAEVIKTNAKKAGDTGS.

The protein belongs to the universal ribosomal protein uS15 family. Part of the 30S ribosomal subunit. Forms a bridge to the 50S subunit in the 70S ribosome, contacting the 23S rRNA.

Its function is as follows. One of the primary rRNA binding proteins, it binds directly to 16S rRNA where it helps nucleate assembly of the platform of the 30S subunit by binding and bridging several RNA helices of the 16S rRNA. Functionally, forms an intersubunit bridge (bridge B4) with the 23S rRNA of the 50S subunit in the ribosome. The sequence is that of Small ribosomal subunit protein uS15 from Afipia carboxidovorans (strain ATCC 49405 / DSM 1227 / KCTC 32145 / OM5) (Oligotropha carboxidovorans).